The following is an 880-amino-acid chain: Leucine--tRNA ligase (880 aa).

Positions 46–56 (PYPSGALHMGH) match the 'HIGH' region motif. The 'KMSKS' region motif lies at 638-642 (KMSKS). Lys-641 is an ATP binding site.

The protein belongs to the class-I aminoacyl-tRNA synthetase family.

It localises to the cytoplasm. It carries out the reaction tRNA(Leu) + L-leucine + ATP = L-leucyl-tRNA(Leu) + AMP + diphosphate. This is Leucine--tRNA ligase from Xanthomonas oryzae pv. oryzae (strain MAFF 311018).